Consider the following 426-residue polypeptide: Enolase 1 (426 aa).

A (2R)-2-phosphoglycerate-binding site is contributed by Q163. The Proton donor role is filled by E205. Mg(2+)-binding residues include D242, E283, and D310. Residues K335, R364, S365, and K386 each contribute to the (2R)-2-phosphoglycerate site. K335 functions as the Proton acceptor in the catalytic mechanism.

Belongs to the enolase family. It depends on Mg(2+) as a cofactor.

Its subcellular location is the cytoplasm. It localises to the secreted. The protein resides in the cell surface. The catalysed reaction is (2R)-2-phosphoglycerate = phosphoenolpyruvate + H2O. The protein operates within carbohydrate degradation; glycolysis; pyruvate from D-glyceraldehyde 3-phosphate: step 4/5. Its function is as follows. Catalyzes the reversible conversion of 2-phosphoglycerate (2-PG) into phosphoenolpyruvate (PEP). It is essential for the degradation of carbohydrates via glycolysis. This chain is Enolase 1, found in Streptomyces coelicolor (strain ATCC BAA-471 / A3(2) / M145).